The sequence spans 442 residues: N-acetyl-S-alkylcysteine sulfoxide monooxygenase (442 aa).

Residues Asp58, Thr95, His145, Tyr149, Ser219, and Ser220 each contribute to the FMN site.

Belongs to the NtaA/SnaA/DszA monooxygenase family. As to quaternary structure, homodimer.

It carries out the reaction (R)-N-acetyl-S-benzyl-L-cysteine sulfoxide + FMNH2 + O2 = N-acetyl-S-hydroxy-L-cysteine + benzaldehyde + FMN + H2O + H(+). It participates in amino-acid metabolism. Its function is as follows. Involved in a cysteine salvage pathway from S-alkylcysteine. Catalyzes the C-S bond cleavage in N-acetyl-S-benzyl-L-cysteine sulfoxide leading to N-acetyl-S-hydroxy-L-cysteine and benzaldehyde. This pathway is likely important in the catabolism of alkylated cysteine generated by proteolysis of alkylated glutathione formed in the detoxification of a wide range of electrophiles. Has much less efficient activity with N-acetyl-S-methyl-L-cysteine sulfoxide as substrate. Cannot use S-alkylated L-cysteine sulfones and ketone analogs as substrates, demonstrating that the sulfoxide is required for activity. The sequence is that of N-acetyl-S-alkylcysteine sulfoxide monooxygenase from Bacillus subtilis (strain 168).